Reading from the N-terminus, the 156-residue chain is MPRKGHIAKRDVLPDPLYNSKVVTKLINSIMLDGKKGVAQKICYDAFEIIAEKSGKDAMEVFETAMNNIMPLLEVKARRIGGATYQVPIEVRPERRQTLGIRWMLIAARKRGERSMRERLAGELLDASNNTGAAVKKREDTHKMAEANKAFAHYRY.

Belongs to the universal ribosomal protein uS7 family. As to quaternary structure, part of the 30S ribosomal subunit. Contacts proteins S9 and S11.

One of the primary rRNA binding proteins, it binds directly to 16S rRNA where it nucleates assembly of the head domain of the 30S subunit. Is located at the subunit interface close to the decoding center, probably blocks exit of the E-site tRNA. This Clostridium botulinum (strain 657 / Type Ba4) protein is Small ribosomal subunit protein uS7.